Here is a 312-residue protein sequence, read N- to C-terminus: Glyoxylate/hydroxypyruvate reductase A (312 aa).

Residue R227 is part of the active site. H275 functions as the Proton donor in the catalytic mechanism.

This sequence belongs to the D-isomer specific 2-hydroxyacid dehydrogenase family. GhrA subfamily.

Its subcellular location is the cytoplasm. It catalyses the reaction glycolate + NADP(+) = glyoxylate + NADPH + H(+). It carries out the reaction (R)-glycerate + NAD(+) = 3-hydroxypyruvate + NADH + H(+). The enzyme catalyses (R)-glycerate + NADP(+) = 3-hydroxypyruvate + NADPH + H(+). Catalyzes the NADPH-dependent reduction of glyoxylate and hydroxypyruvate into glycolate and glycerate, respectively. This chain is Glyoxylate/hydroxypyruvate reductase A, found in Salmonella choleraesuis (strain SC-B67).